We begin with the raw amino-acid sequence, 120 residues long: Ribosome-binding factor A (120 aa).

The protein belongs to the RbfA family. In terms of assembly, monomer. Binds 30S ribosomal subunits, but not 50S ribosomal subunits or 70S ribosomes.

It localises to the cytoplasm. Its function is as follows. One of several proteins that assist in the late maturation steps of the functional core of the 30S ribosomal subunit. Associates with free 30S ribosomal subunits (but not with 30S subunits that are part of 70S ribosomes or polysomes). Required for efficient processing of 16S rRNA. May interact with the 5'-terminal helix region of 16S rRNA. The chain is Ribosome-binding factor A from Clostridium botulinum (strain Loch Maree / Type A3).